A 386-amino-acid polypeptide reads, in one-letter code: Glutamate 5-kinase (386 aa).

Lysine 28 lines the ATP pocket. Substrate-binding residues include serine 68, aspartate 155, and asparagine 167. An ATP-binding site is contributed by 187 to 188 (TD). The region spanning 294–372 (RGRLVLDDGA…EKIESILGYI (79 aa)) is the PUA domain.

It belongs to the glutamate 5-kinase family.

Its subcellular location is the cytoplasm. The enzyme catalyses L-glutamate + ATP = L-glutamyl 5-phosphate + ADP. It functions in the pathway amino-acid biosynthesis; L-proline biosynthesis; L-glutamate 5-semialdehyde from L-glutamate: step 1/2. In terms of biological role, catalyzes the transfer of a phosphate group to glutamate to form L-glutamate 5-phosphate. This is Glutamate 5-kinase from Hahella chejuensis (strain KCTC 2396).